The primary structure comprises 133 residues: DUF35 domain-containing scaffold protein (133 aa).

Zn(2+) is bound by residues C23, C26, C37, and C40.

It belongs to the scaffold protein DUF35 family. As to quaternary structure, interacts with acetoacetyl-CoA thiolase and HMG-CoA synthase (HMGCS) that catalyzes the first and second step in the mevalonate pathway, respectively.

Functionally, functions as a scaffold to connect the acetoacetyl-CoA thiolase and HMG-CoA synthase (HMGCS) dimers in the channeling thiolase/HMGCS complex, which allows for efficient coupling of the endergonic thiolase reaction with the exergonic HMGCS reaction. This Methanothermobacter thermautotrophicus (strain ATCC 29096 / DSM 1053 / JCM 10044 / NBRC 100330 / Delta H) (Methanobacterium thermoautotrophicum) protein is DUF35 domain-containing scaffold protein.